A 376-amino-acid polypeptide reads, in one-letter code: Chaperone protein DnaJ (376 aa).

The J domain occupies 5–70 (DYYEVLGVGR…DKKAAYDQFG (66 aa)). A CR-type zinc finger spans residues 132–210 (GLTKELRIPT…CHGEGRVEKS (79 aa)). Zn(2+) contacts are provided by Cys-145, Cys-148, Cys-162, Cys-165, Cys-184, Cys-187, Cys-198, and Cys-201. 4 CXXCXGXG motif repeats span residues 145–152 (CDLCDGSG), 162–169 (CGTCHGQG), 184–191 (CPTCHGRG), and 198–205 (CGKCHGEG).

It belongs to the DnaJ family. As to quaternary structure, homodimer. It depends on Zn(2+) as a cofactor.

It localises to the cytoplasm. In terms of biological role, participates actively in the response to hyperosmotic and heat shock by preventing the aggregation of stress-denatured proteins and by disaggregating proteins, also in an autonomous, DnaK-independent fashion. Unfolded proteins bind initially to DnaJ; upon interaction with the DnaJ-bound protein, DnaK hydrolyzes its bound ATP, resulting in the formation of a stable complex. GrpE releases ADP from DnaK; ATP binding to DnaK triggers the release of the substrate protein, thus completing the reaction cycle. Several rounds of ATP-dependent interactions between DnaJ, DnaK and GrpE are required for fully efficient folding. Also involved, together with DnaK and GrpE, in the DNA replication of plasmids through activation of initiation proteins. The protein is Chaperone protein DnaJ of Shewanella frigidimarina (strain NCIMB 400).